The sequence spans 567 residues: Dihydroxy-acid dehydratase 1 (567 aa).

Position 57 (Cys-57) interacts with [2Fe-2S] cluster. Asp-89 lines the Mg(2+) pocket. Position 130 (Cys-130) interacts with [2Fe-2S] cluster. Residues Asp-131 and Lys-132 each coordinate Mg(2+). Lys-132 bears the N6-carboxylysine mark. Cys-202 lines the [2Fe-2S] cluster pocket. Glu-454 serves as a coordination point for Mg(2+). Ser-480 acts as the Proton acceptor in catalysis.

Belongs to the IlvD/Edd family. In terms of assembly, homodimer. Requires [2Fe-2S] cluster as cofactor. The cofactor is Mg(2+).

The enzyme catalyses (2R)-2,3-dihydroxy-3-methylbutanoate = 3-methyl-2-oxobutanoate + H2O. The catalysed reaction is (2R,3R)-2,3-dihydroxy-3-methylpentanoate = (S)-3-methyl-2-oxopentanoate + H2O. It functions in the pathway amino-acid biosynthesis; L-isoleucine biosynthesis; L-isoleucine from 2-oxobutanoate: step 3/4. The protein operates within amino-acid biosynthesis; L-valine biosynthesis; L-valine from pyruvate: step 3/4. Its function is as follows. Functions in the biosynthesis of branched-chain amino acids. Catalyzes the dehydration of (2R,3R)-2,3-dihydroxy-3-methylpentanoate (2,3-dihydroxy-3-methylvalerate) into 2-oxo-3-methylpentanoate (2-oxo-3-methylvalerate) and of (2R)-2,3-dihydroxy-3-methylbutanoate (2,3-dihydroxyisovalerate) into 2-oxo-3-methylbutanoate (2-oxoisovalerate), the penultimate precursor to L-isoleucine and L-valine, respectively. The sequence is that of Dihydroxy-acid dehydratase 1 from Aromatoleum aromaticum (strain DSM 19018 / LMG 30748 / EbN1) (Azoarcus sp. (strain EbN1)).